We begin with the raw amino-acid sequence, 206 residues long: Transcription factor MYB57 (206 aa).

Residues 1-11 (METTMKKKGRV) are compositionally biased toward basic residues. Positions 1–20 (METTMKKKGRVKATITSQKE) are disordered. 2 HTH myb-type domains span residues 22-74 (EGTV…LNYL) and 75-129 (RPDV…QRHM). 2 DNA-binding regions (H-T-H motif) span residues 50–74 (WNSVAKASGLKRTGKSCRLRWLNYL) and 102–125 (WSKIAKHLPGRTDNEIKNFWRTKI). The segment at 138 to 162 (NHQHHCSGNSQSSGMTTQGSSGKAI) is disordered. Over residues 144 to 159 (SGNSQSSGMTTQGSSG) the composition is skewed to low complexity.

Expressed specifically in flowers.

Its subcellular location is the nucleus. Transcription factor acting redundantly with MYB21 and MYB24 to control stamen filament elongation in the late developed flowers. Repressed at the transcript levels by DELLA proteins. This Arabidopsis thaliana (Mouse-ear cress) protein is Transcription factor MYB57 (MYB57).